The following is a 540-amino-acid chain: Pentatricopeptide repeat-containing protein At3g29290 (540 aa).

12 PPR repeats span residues 106–140, 141–175, 177–205, 213–247, 248–282, 283–317, 318–352, 353–387, 389–423, 424–458, 459–487, and 489–523; these read NEET…GLQP, NAHA…ENVT, HTYS…LERE, DVVL…GHIG, TEIT…KISL, REDA…GMKP, NLVA…GHKP, DEYT…NLCC, NEYL…GLTV, STSS…DCKP, NTFT…KKVE, and DVSL…GLEP.

This sequence belongs to the PPR family. P subfamily.

The protein is Pentatricopeptide repeat-containing protein At3g29290 (EMB2076) of Arabidopsis thaliana (Mouse-ear cress).